Here is a 163-residue protein sequence, read N- to C-terminus: MAFSKDPRRTSLRDSSVEMSSGTQPSCAPKAMPTAHVTFLIDCATGKQVSLAASTAPPHASRANQGCVAPPMKTFVMFRGKTTMLGTQNISLSRGALDGAKDTLPPYRGLGAPHSLPASLPGPQNDPKAQGSSLKPGATEKHSTREKVKHSLKALTCLCGQVE.

Basic and acidic residues predominate over residues 1-16 (MAFSKDPRRTSLRDSS). 2 disordered regions span residues 1-30 (MAFS…CAPK) and 96-149 (ALDG…EKVK). The span at 17-26 (VEMSSGTQPS) shows a compositional bias: polar residues.

In terms of assembly, interacts with 14-3-3 proteins.

Functionally, may regulate the transcriptional function of androgen and estrogen receptors. This chain is Steroid receptor-associated and regulated protein, found in Mus musculus (Mouse).